The chain runs to 208 residues: Outer-membrane lipoprotein carrier protein (208 aa).

An N-terminal signal peptide occupies residues 1-21 (MRLIRTLFVAALAMGASLAHA).

Belongs to the LolA family. In terms of assembly, monomer.

The protein localises to the periplasm. Its function is as follows. Participates in the translocation of lipoproteins from the inner membrane to the outer membrane. Only forms a complex with a lipoprotein if the residue after the N-terminal Cys is not an aspartate (The Asp acts as a targeting signal to indicate that the lipoprotein should stay in the inner membrane). The polypeptide is Outer-membrane lipoprotein carrier protein (Pseudomonas aeruginosa (strain UCBPP-PA14)).